The chain runs to 119 residues: Protein GSKIP homolog (119 aa).

This sequence belongs to the GSKIP family.

In Drosophila melanogaster (Fruit fly), this protein is Protein GSKIP homolog.